The primary structure comprises 22 residues: C-type natriuretic peptide (22 aa).

A disulfide bond links C6 and C22.

It belongs to the natriuretic peptide family.

Its subcellular location is the secreted. In terms of biological role, hormone which plays a role in endochondral ossification through regulation of cartilaginous growth plate chondrocytes proliferation and differentiation. May also be vasoactive and natriuretic. Specifically binds and stimulates the cGMP production of the NPR2 receptor. Binds the clearance receptor NPR3. This chain is C-type natriuretic peptide (NPPC), found in Gallus gallus (Chicken).